The sequence spans 436 residues: D-amino acid dehydrogenase (436 aa).

3–17 is a binding site for FAD; sequence ILILGSGVIGVTSAW.

The protein belongs to the DadA oxidoreductase family. FAD serves as cofactor.

The enzyme catalyses a D-alpha-amino acid + A + H2O = a 2-oxocarboxylate + AH2 + NH4(+). Its pathway is amino-acid degradation; D-alanine degradation; NH(3) and pyruvate from D-alanine: step 1/1. In terms of biological role, oxidative deamination of D-amino acids. The polypeptide is D-amino acid dehydrogenase (Photorhabdus laumondii subsp. laumondii (strain DSM 15139 / CIP 105565 / TT01) (Photorhabdus luminescens subsp. laumondii)).